A 436-amino-acid chain; its full sequence is MGKPVVAIVGRPNVGKSTIFNRIAGERISIVEDTPGVTRDRIYSSAEWLNYDFNLIDTGGIDIGDEPFLTQIRQQAEIAMDEADVIIFMVNGREGVTSADEEVAKILYRTKKPVVLAVNKLDNTEMRANIYDFYALGFGEPYPISGTHGLGLGDLLDACAEHFKNIPETKYSDDVVQFCLIGRPNVGKSSLVNAMLGEERVIVSNVAGTTRDAVDTAFTYNQQEFVIVDTAGMRKKGKVYETTEKYSVLRALKAIDRSDVVGVVLNAEEGILEQDKRIAGYAHEAGKAVVIIVNKWDAVDKDERTMKEFEQNIREHFQFLDYAPVLFMSALTTKRIHTLMPAIIKASENHSLRVQTNVLNDVIMDAVAMNPTPTHNGSRLKIYYATQVAVKPPSFVVFVNDPELMHFSYERFLENRIRDAFGFEGTPIKIFARARK.

EngA-type G domains are found at residues 4 to 167 and 176 to 351; these read PVVA…KNIP and VQFC…ENHS. GTP-binding positions include 10–17, 57–61, 119–122, 182–189, 229–233, and 294–297; these read GRPNVGKS, DTGGI, NKLD, DTAGM, and NKWD. Residues 352-436 enclose the KH-like domain; sequence LRVQTNVLND…PIKIFARARK (85 aa).

The protein belongs to the TRAFAC class TrmE-Era-EngA-EngB-Septin-like GTPase superfamily. EngA (Der) GTPase family. As to quaternary structure, associates with the 50S ribosomal subunit.

GTPase that plays an essential role in the late steps of ribosome biogenesis. This Bacillus velezensis (strain DSM 23117 / BGSC 10A6 / LMG 26770 / FZB42) (Bacillus amyloliquefaciens subsp. plantarum) protein is GTPase Der.